The chain runs to 926 residues: Progesterone receptor (926 aa).

The interval 1-48 (MTELQAKDPQVLHTSGASPSPPHIGSPLLARLDSGPFQGSQHSDVSSV) is disordered. An AF3; mediates transcriptional activation (in isoform B) region spans residues 1-165 (MTELQAKDPQ…PATKGLLSPL (165 aa)). Residues 1–559 (MTELQAKDPQ…YGFDSLPQKI (559 aa)) form a modulating, Pro-Rich region. Lysine 7 participates in a covalent cross-link: Glycyl lysine isopeptide (Lys-Gly) (interchain with G-Cter in SUMO). Serine 20 carries the phosphoserine modification. Positions 56–60 (LDGLL) match the LXXL motif 1 motif. Position 82 is a phosphoserine (serine 82). Positions 116–120 (LDSLL) match the LXXL motif 1 motif. Serine 131 and serine 163 each carry phosphoserine. The tract at residues 166–305 (MSRPEIKAGD…LATTVVDFIH (140 aa)) is mediates transcriptional transrepression (in isoform A). Residues 168 to 256 (RPEIKAGDSS…GTGSGGGVAA (89 aa)) are disordered. Positions 184 to 188 (KVLPK) match the Nuclear localization signal motif. A phosphoserine mark is found at serine 191 and serine 214. The residue at position 294 (serine 294) is a Phosphoserine; by MAPK1. The segment at 327 to 364 (DSYDGGATAQGPFAPPRGSPSAPSPPVPCGDFPDCTYP) is disordered. The span at 339 to 354 (FAPPRGSPSAPSPPVP) shows a compositional bias: pro residues. Serine 345 carries the post-translational modification Phosphoserine; by MAPK. Lysine 388 is covalently cross-linked (Glycyl lysine isopeptide (Lys-Gly) (interchain with G-Cter in SUMO); alternate). Residue lysine 388 forms a Glycyl lysine isopeptide (Lys-Gly) (interchain with G-Cter in ubiquitin); alternate linkage. Residues 391 to 447 (EEGADAAVRSPRPYLSAGASSSTFPDFPLAPAPQRAPSSRPGEAAVAGGPSSAAVSP) form a disordered region. Serine 400 carries the post-translational modification Phosphoserine; by CDK2. Positions 422–447 (APQRAPSSRPGEAAVAGGPSSAAVSP) are enriched in low complexity. The segment at 453-539 (SALECILYKA…VYPPYLNYLR (87 aa)) is AF1; mediates transcriptional activation. A Glycyl lysine isopeptide (Lys-Gly) (interchain with G-Cter in SUMO) cross-link involves residue lysine 524. The segment at residues 557-632 (QKICLICGDE…AGMVLGGRKF (76 aa)) is a DNA-binding region (nuclear receptor). 2 consecutive NR C4-type zinc fingers follow at residues 560–580 (CLIC…CGSC) and 596–615 (CAGR…CPAC). Serine 669 carries the post-translational modification Phosphoserine. An NR LBD domain is found at 672 to 906 (QEIQLVPPLI…EFPEMMSEVI (235 aa)). Residues 673 to 926 (EIQLVPPLIN…MVKPLLFHKK (254 aa)) form an AF2; mediates transcriptional activation region. Arginine 759 contacts progesterone.

Belongs to the nuclear hormone receptor family. NR3 subfamily. As to quaternary structure, interacts with SMARD1 and UNC45A. Interacts with CUEDC2; the interaction promotes ubiquitination, decreases sumoylation, and represses transcriptional activity. Interacts with PIAS3; the interaction promotes sumoylation of PR in a hormone-dependent manner, inhibits DNA-binding, and alters nuclear export. Interacts with SP1; the interaction requires ligand-induced phosphorylation on Ser-294 by ERK1/2 MAPK. Interacts with PRMT2. Isoform A interacts with NCOR2. Isoform B (but not isoform A) interacts with NCOA2 and NCOA1. Isoform B (but not isoform A) interacts with KLF9. Phosphorylated on multiple serine sites. Several of these sites are hormone-dependent. Phosphorylation on Ser-294 is highly hormone-dependent and modulates ubiquitination and sumoylation on Lys-388. Phosphorylation on Ser-345 also requires induction by hormone. Basal phosphorylation on Ser-82, Ser-163, Ser-191 and Ser-400 is increased in response to progesterone and can be phosphorylated in vitro by the CDK2-A1 complex. Increased levels of phosphorylation on Ser-400 also in the presence of EGF, heregulin, IGF, PMA and FBS. Phosphorylation at this site by CDK2 is ligand-independent, and increases nuclear translocation and transcriptional activity. Phosphorylation at Ser-163 and Ser-294, but not at Ser-191, is impaired during the G(2)/M phase of the cell cycle. Phosphorylation on Ser-345 by ERK1/2 MAPK is required for interaction with SP1. In terms of processing, sumoylation is hormone-dependent and represses transcriptional activity. Sumoylation on all three sites is enhanced by PIAS3. Desumoylated by SENP1. Sumoylation on Lys-388, the main site of sumoylation, is repressed by ubiquitination on the same site, and modulated by phosphorylation at Ser-294. Post-translationally, ubiquitination is hormone-dependent and represses sumoylation on the same site. Promoted by MAPK-mediated phosphorylation on Ser-294. Ubiquitinated by UBR5, leading to its degradation: UBR5 specifically recognizes and binds ligand-bound PGR when it is not associated with coactivators (NCOAs). In presence of NCOAs, the UBR5-degron is not accessible, preventing its ubiquitination and degradation. Palmitoylated by ZDHHC7 and ZDHHC21. Palmitoylation is required for plasma membrane targeting and for rapid intracellular signaling via ERK and AKT kinases and cAMP generation. Expression of isoform A and isoform B in mammary epithelial cells is temporally and spatially separated during normal mammary gland development. Isoform A and isoform B are expressed in the pituitary. Isoform A and isoform B are differentially expressed in the ovary and oviduct, and the level of expression is dependent on both the cell type and estrous cycle stage.

The protein localises to the nucleus. Its subcellular location is the cytoplasm. In terms of biological role, the steroid hormones and their receptors are involved in the regulation of eukaryotic gene expression and affect cellular proliferation and differentiation in target tissues. Depending on the isoform, progesterone receptor functions as a transcriptional activator or repressor. Ligand-dependent transdominant repressor of steroid hormone receptor transcriptional activity including repression of its isoform B, MR and ER. Transrepressional activity may involve recruitment of corepressor NCOR2. Its function is as follows. Transcriptional activator of several progesteron-dependent promoters in a variety of cell types. Involved in activation of SRC-dependent MAPK signaling on hormone stimulation. The polypeptide is Progesterone receptor (Pgr) (Mus musculus (Mouse)).